Here is a 132-residue protein sequence, read N- to C-terminus: Phosphoribosyl-AMP cyclohydrolase (132 aa).

D82 contacts Mg(2+). Position 83 (C83) interacts with Zn(2+). Mg(2+) is bound by residues D84 and D86. 2 residues coordinate Zn(2+): C100 and C107.

This sequence belongs to the PRA-CH family. Homodimer. Mg(2+) serves as cofactor. Zn(2+) is required as a cofactor.

The protein localises to the cytoplasm. It catalyses the reaction 1-(5-phospho-beta-D-ribosyl)-5'-AMP + H2O = 1-(5-phospho-beta-D-ribosyl)-5-[(5-phospho-beta-D-ribosylamino)methylideneamino]imidazole-4-carboxamide. It participates in amino-acid biosynthesis; L-histidine biosynthesis; L-histidine from 5-phospho-alpha-D-ribose 1-diphosphate: step 3/9. Functionally, catalyzes the hydrolysis of the adenine ring of phosphoribosyl-AMP. The protein is Phosphoribosyl-AMP cyclohydrolase of Dechloromonas aromatica (strain RCB).